The primary structure comprises 594 residues: Protein CBFA2T2 (594 aa).

Phosphoserine is present on serine 24. Lysine 29 participates in a covalent cross-link: Glycyl lysine isopeptide (Lys-Gly) (interchain with G-Cter in SUMO2). The disordered stretch occupies residues 48–96 (GGPRPVSFTPTALSNGINHSPPTLNGAPSPPQRFSNGPASSTSSALTNQ). 2 stretches are compositionally biased toward polar residues: residues 55-70 (FTPTALSNGINHSPPT) and 79-96 (QRFSNGPASSTSSALTNQ). An interaction with PRDM14 region spans residues 98–206 (LPATCGARQL…QHEHLLLNTS (109 aa)). Residues 104–199 (ARQLSKLKRF…TPSQYLAQHE (96 aa)) form the TAFH domain. The interval 220 to 257 (VHGNGKRPSPERRDENNFERDTVPPEPPAKRVCTISPA) is disordered. Over residues 227–242 (PSPERRDENNFERDTV) the composition is skewed to basic and acidic residues. Phosphoserine is present on serine 255. The nervy homology region 2 (NHR2) stretch occupies residues 322–368 (QDELVDHRLTEREWADEWKHLDHALNCIMEMVEKTRRSMAVLRRCQE). The interval 388–416 (RKTGTELVSRQHSPGSTDSLSNDSQREFT) is disordered. Residues 393–410 (ELVSRQHSPGSTDSLSND) are compositionally biased toward polar residues. Position 400 is a phosphoserine (serine 400). Positions 426–475 (VEFWKKTEEAVNKVKIQAMSEVQKAVAEAEQKAFEVIATERARMEQTIAD) are nervy homology region 3 (NHR3). Lysine 440 is covalently cross-linked (Glycyl lysine isopeptide (Lys-Gly) (interchain with G-Cter in SUMO2)). Residues 442–482 (QAMSEVQKAVAEAEQKAFEVIATERARMEQTIADVKRQAAE) adopt a coiled-coil conformation. Zn(2+) contacts are provided by cysteine 498, cysteine 501, cysteine 509, cysteine 512, cysteine 518, cysteine 522, histidine 530, and cysteine 534. The MYND-type zinc finger occupies 498 to 534 (CWNCGRKASETCSGCNIARYCGSFCQHKDWERHHRLC). Positions 538 to 594 (LHGHSPHSQSRPLLPGGRGSARSADCSVPSPALDKTSATTSRSSTPASVTAIDANGL) are disordered. Phosphoserine is present on serine 567. Over residues 573–588 (TSATTSRSSTPASVTA) the composition is skewed to low complexity.

Belongs to the CBFA2T family. In terms of assembly, homooligomer. Homotetramerization is mediated by the NHR2 domain. Interacts with CBFA2T3/MTG16. Can interact with RUNX1T1/CBFA2T1. Heterotetramerization between members of the CBFA2T family is proposed. Interacts with RBP, GFI1, TCF4, PRDM14. Interacts with TAL1 and CBFA2T3/MTG16; the heteromer with CBFA2T3/MTG16 may function in repression of TAL1. In terms of tissue distribution, expressed in embryonic stem cells.

It localises to the nucleus. In terms of biological role, transcriptional corepressor which facilitates transcriptional repression via its association with DNA-binding transcription factors and recruitment of other corepressors and histone-modifying enzymes. Via association with PRDM14 is involved in regulation of embryonic stem cell (ESC) pluripotency. Involved in primordial germ cell (PCG) formation. Stabilizes PRDM14 and OCT4 on chromatin in a homooligomerization-dependent mannerCan repress the expression of MMP7 in a ZBTB33-dependent manner. Through heteromerization with CBFA2T3/MTG16 may be involved in regulation of the proliferation and the differentiation of erythroid progenitors by repressing the expression of TAL1 target genes. Required for the maintenance of the secretory cell lineage in the small intestine. Can inhibit Notch signaling probably by association with RBPJ and may be involved in GFI1-mediated Paneth cell differentiation. The polypeptide is Protein CBFA2T2 (Cbfa2t2) (Mus musculus (Mouse)).